Consider the following 488-residue polypeptide: Ribulose bisphosphate carboxylase large chain (488 aa).

Substrate is bound by residues Asn127 and Thr177. The active-site Proton acceptor is the Lys179. Lys181 contacts substrate. Residues Lys205, Asp207, and Glu208 each coordinate Mg(2+). At Lys205 the chain carries N6-carboxylysine. His297 (proton acceptor) is an active-site residue. Residues Arg298, His330, and Ser382 each coordinate substrate.

This sequence belongs to the RuBisCO large chain family. Type I subfamily. In terms of assembly, heterohexadecamer of 8 large chains and 8 small chains. The cofactor is Mg(2+).

The protein resides in the plastid. It is found in the chloroplast. It catalyses the reaction 2 (2R)-3-phosphoglycerate + 2 H(+) = D-ribulose 1,5-bisphosphate + CO2 + H2O. It carries out the reaction D-ribulose 1,5-bisphosphate + O2 = 2-phosphoglycolate + (2R)-3-phosphoglycerate + 2 H(+). Its function is as follows. RuBisCO catalyzes two reactions: the carboxylation of D-ribulose 1,5-bisphosphate, the primary event in carbon dioxide fixation, as well as the oxidative fragmentation of the pentose substrate in the photorespiration process. Both reactions occur simultaneously and in competition at the same active site. This is Ribulose bisphosphate carboxylase large chain from Pyropia suborbiculata (Red alga).